The primary structure comprises 878 residues: Aconitate hydratase A (878 aa).

Cys-426, Cys-492, and Cys-495 together coordinate [4Fe-4S] cluster.

This sequence belongs to the aconitase/IPM isomerase family. As to quaternary structure, monomer. [4Fe-4S] cluster is required as a cofactor.

It catalyses the reaction citrate = D-threo-isocitrate. The catalysed reaction is (2S,3R)-3-hydroxybutane-1,2,3-tricarboxylate = 2-methyl-cis-aconitate + H2O. It participates in carbohydrate metabolism; tricarboxylic acid cycle; isocitrate from oxaloacetate: step 2/2. It functions in the pathway organic acid metabolism; propanoate degradation. In terms of biological role, involved in the catabolism of short chain fatty acids (SCFA) via the tricarboxylic acid (TCA)(acetyl degradation route) and probably the 2-methylcitrate cycle I (propionate degradation route). Catalyzes the reversible isomerization of citrate to isocitrate via cis-aconitate. Could catalyze the hydration of 2-methyl-cis-aconitate to yield (2R,3S)-2-methylisocitrate. The apo form of AcnA functions as a RNA-binding regulatory protein. In Rickettsia conorii (strain ATCC VR-613 / Malish 7), this protein is Aconitate hydratase A (acnA).